The chain runs to 307 residues: Universal stress protein A family protein C25B2.10 (307 aa).

The disordered stretch occupies residues 1–63 (MSESAPAGSK…RSSMEQPTFR (63 aa)). The segment covering 21–30 (PEPRTSKDQQ) has biased composition (basic and acidic residues). Residue S44 is modified to Phosphoserine. T48 carries the phosphothreonine modification. A phosphoserine mark is found at S98 and S102.

The protein belongs to the universal stress protein A family.

It is found in the barrier septum. The protein resides in the cell tip. The polypeptide is Universal stress protein A family protein C25B2.10 (Schizosaccharomyces pombe (strain 972 / ATCC 24843) (Fission yeast)).